Here is a 409-residue protein sequence, read N- to C-terminus: Iron(III) salmochelin esterase (409 aa).

This sequence belongs to the Fes family.

The protein resides in the cytoplasm. It carries out the reaction Fe(III)-C-5-deoxy-beta-D-glucosyl-enterobactin + H2O = Fe(III)-{di[N-(2,3-dihydroxybenzoyl)-L-seryl]-N-(C-5-[deoxy-beta-D-glucosyl]-2,3-dihydroxybenzoyl)-L-serine} + H(+). The enzyme catalyses Fe(III)-{di[N-(2,3-dihydroxybenzoyl)-L-seryl]-N-(C-5-[deoxy-beta-D-glucosyl]-2,3-dihydroxybenzoyl)-L-serine} + H2O + H(+) = Fe(III)-{N-(2,3-dihydroxybenzoyl)-L-seryl-N-(C-5-[deoxy-beta-D-glucosyl]-2,3-dihydroxybenzoyl)-L-serine} + N-(2,3-dihydroxybenzoyl)-L-serine. It catalyses the reaction Fe(III)-{N-(2,3-dihydroxybenzoyl)-L-seryl-[N-(C-5-[deoxy-beta-D-glucosyl]-2,3-dihydroxybenzoyl)-L-serine]2} + H2O + H(+) = Fe(III)-{N-(2,3-dihydroxybenzoyl)-L-seryl-N-(C-5-[deoxy-beta-D-glucosyl]-2,3-dihydroxybenzoyl)-L-serine} + N-(C-5-[deoxy-beta-D-glucosyl]-2,3-dihydroxybenzoyl)-L-serine. The catalysed reaction is Fe(III)-di(C-5-deoxy-beta-D-glucosyl)-enterobactin + H2O = Fe(III)-{N-(2,3-dihydroxybenzoyl)-L-seryl-[N-(C-5-[deoxy-beta-D-glucosyl]-2,3-dihydroxybenzoyl)-L-serine]2} + H(+). It carries out the reaction Fe(III)-{N-(2,3-dihydroxybenzoyl)-L-seryl-[N-(C-5-[deoxy-beta-D-glucosyl]-2,3-dihydroxybenzoyl)-L-serine]2} + H2O + H(+) = Fe(III)-[N-(C-5-[deoxy-beta-D-glucosyl]-2,3-dihydroxybenzoyl)-L-serine]2 + N-(2,3-dihydroxybenzoyl)-L-serine. The enzyme catalyses Fe(III)-[N-(C-5-[deoxy-beta-D-glucosyl]-2,3-dihydroxybenzoyl)-L-serine]2 + H2O + H(+) = Fe(III)-[N-(C-5-[deoxy-beta-D-glucosyl]-2,3-dihydroxybenzoyl)-L-serine] + N-(C-5-[deoxy-beta-D-glucosyl]-2,3-dihydroxybenzoyl)-L-serine. Catalyzes the hydrolysis of both the apo and Fe3(+)-bound forms of enterobactin (Ent), monoglucosyl-C-Ent (MGE), diglucosyl-C-Ent (DGE) and triglucosyl-C-Ent (TGE). Shows higher catalytic efficiencies on Fe3(+)-bound forms. The initial linear trimer products are, in turn, very good substrates for further hydrolytic cleavage by IroD, leading to complete degradation of the trilactone to DHB-Ser and/or Glc-DHB-Ser monomers. Hydrolyzes MGE and DGE regioselectively. May be the ferric MGE/DGE esterase responsible for cytoplasmic iron release. The sequence is that of Iron(III) salmochelin esterase from Escherichia coli O6:H1 (strain CFT073 / ATCC 700928 / UPEC).